Here is a 366-residue protein sequence, read N- to C-terminus: Phospho-N-acetylmuramoyl-pentapeptide-transferase (366 aa).

The next 10 helical transmembrane spans lie at 27-47, 76-96, 101-121, 136-156, 176-196, 205-225, 241-261, 264-284, 285-305, and 343-363; these read GAAITSLVLCWLLGRPMISLL, PTMGGLLILLAVSLSCLIWVI, FFWLSLLSMLFMGGIGFWDDF, IKLLAQAIVGVVVGIVLLADP, IDIGWMAIPFFILVVMGSSNA, GLAAGCTIGVAFVYAVFSYIS, GAGELTIFCSALIGACMGFLW, CYPAAVFMGDTGSLAIGSALG, VVAIILGQELLLVIAGGIFVI, and AVTVRFWILSLLFGLLALSSL.

This sequence belongs to the glycosyltransferase 4 family. MraY subfamily. Mg(2+) is required as a cofactor.

The protein localises to the cell inner membrane. The enzyme catalyses UDP-N-acetyl-alpha-D-muramoyl-L-alanyl-gamma-D-glutamyl-meso-2,6-diaminopimeloyl-D-alanyl-D-alanine + di-trans,octa-cis-undecaprenyl phosphate = di-trans,octa-cis-undecaprenyl diphospho-N-acetyl-alpha-D-muramoyl-L-alanyl-D-glutamyl-meso-2,6-diaminopimeloyl-D-alanyl-D-alanine + UMP. It participates in cell wall biogenesis; peptidoglycan biosynthesis. In terms of biological role, catalyzes the initial step of the lipid cycle reactions in the biosynthesis of the cell wall peptidoglycan: transfers peptidoglycan precursor phospho-MurNAc-pentapeptide from UDP-MurNAc-pentapeptide onto the lipid carrier undecaprenyl phosphate, yielding undecaprenyl-pyrophosphoryl-MurNAc-pentapeptide, known as lipid I. The protein is Phospho-N-acetylmuramoyl-pentapeptide-transferase of Methylacidiphilum infernorum (isolate V4) (Methylokorus infernorum (strain V4)).